Here is a 379-residue protein sequence, read N- to C-terminus: Cytochrome b (379 aa).

4 helical membrane-spanning segments follow: residues 34–54, 78–99, 114–134, and 179–199; these read FGSLLGICLITQILTGLLLAM, WLIRNLHANGASFFFICIYLHI, WNTGVILLLTLMATAFVGYVL, and FFALHFLLPFLIAGITLIHLT. Heme b-binding residues include His-84 and His-98. Residues His-183 and His-197 each contribute to the heme b site. His-202 contributes to the a ubiquinone binding site. The next 4 helical transmembrane spans lie at 227-247, 289-309, 321-341, and 348-368; these read LKDILGFTLMFIPLLILAFFS, LGGVLALAASVLILFLIPFLH, LSQVLFWFLVANLLILTWIGS, and FIIIGQMASFTYFLILLILFP.

It belongs to the cytochrome b family. As to quaternary structure, the cytochrome bc1 complex contains 11 subunits: 3 respiratory subunits (MT-CYB, CYC1 and UQCRFS1), 2 core proteins (UQCRC1 and UQCRC2) and 6 low-molecular weight proteins (UQCRH/QCR6, UQCRB/QCR7, UQCRQ/QCR8, UQCR10/QCR9, UQCR11/QCR10 and a cleavage product of UQCRFS1). This cytochrome bc1 complex then forms a dimer. Requires heme b as cofactor.

Its subcellular location is the mitochondrion inner membrane. Its function is as follows. Component of the ubiquinol-cytochrome c reductase complex (complex III or cytochrome b-c1 complex) that is part of the mitochondrial respiratory chain. The b-c1 complex mediates electron transfer from ubiquinol to cytochrome c. Contributes to the generation of a proton gradient across the mitochondrial membrane that is then used for ATP synthesis. This Casuarius bennetti (Dwarf cassowary) protein is Cytochrome b (MT-CYB).